Consider the following 232-residue polypeptide: tRNA (guanine-N(1)-)-methyltransferase (232 aa).

S-adenosyl-L-methionine is bound by residues Gly111 and 131–136 (IGDYIL).

It belongs to the RNA methyltransferase TrmD family. Homodimer.

The protein localises to the cytoplasm. It carries out the reaction guanosine(37) in tRNA + S-adenosyl-L-methionine = N(1)-methylguanosine(37) in tRNA + S-adenosyl-L-homocysteine + H(+). In terms of biological role, specifically methylates guanosine-37 in various tRNAs. This Bartonella bacilliformis (strain ATCC 35685 / KC583 / Herrer 020/F12,63) protein is tRNA (guanine-N(1)-)-methyltransferase.